Reading from the N-terminus, the 391-residue chain is Ferrochelatase (391 aa).

Fe cation-binding residues include H196 and E281.

Belongs to the ferrochelatase family.

Its subcellular location is the cytoplasm. It catalyses the reaction heme b + 2 H(+) = protoporphyrin IX + Fe(2+). It functions in the pathway porphyrin-containing compound metabolism; protoheme biosynthesis; protoheme from protoporphyrin-IX: step 1/1. Its function is as follows. Catalyzes the ferrous insertion into protoporphyrin IX. This Prochlorococcus marinus (strain MIT 9301) protein is Ferrochelatase.